The primary structure comprises 622 residues: MEESEPERKRARTDEVPAGGSRSEAEDEDDEDYVPYVPLRQRRQLLLQKLLQRRRKGAAEEEQQDSGSEPRGDEDDIPLGPQSNVSLLDQHQHLKEKAEARKESAKEKQLKEEEKILESVAEGRALMSVKEMAKGITYDDPIKTSWTPPRYVLSMSEERHERVRKKYHILVEGDGIPPPIKSFKEMKFPAAILRGLKKKGIHHPTPIQIQGIPTILSGRDMIGIAFTGSGKTLVFTLPVIMFCLEQEKRLPFSKREGPYGLIICPSRELARQTHGILEYYCRLLQEDSSPLLRCALCIGGMSVKEQMETIRHGVHMMVATPGRLMDLLQKKMVSLDICRYLALDEADRMIDMGFEGDIRTIFSYFKGQRQTLLFSATMPKKIQNFAKSALVKPVTINVGRAGAASLDVIQEVEYVKEEAKMVYLLECLQKTPPPVLIFAEKKADVDAIHEYLLLKGVEAVAIHGGKDQEERTKAIEAFREGKKDVLVATDVASKGLDFPAIQHVINYDMPEEIENYVHRIGRTGRSGNTGIATTFINKACDESVLMDLKALLLEAKQKVPPVLQVLHCGDESMLDIGGERGCAFCGGLGHRITDCPKLEAMQTKQVSNIGRKDYLAHSSMDF.

The span at M1–E15 shows a compositional bias: basic and acidic residues. Disordered stretches follow at residues M1 to L39 and Q52 to N84. Phosphoserine is present on S4. K9 bears the N6-acetyllysine mark. A Glycyl lysine isopeptide (Lys-Gly) (interchain with G-Cter in ubiquitin) cross-link involves residue K9. Residues S21 and S23 each carry the phosphoserine modification. Y33 is modified (phosphotyrosine). A Glycyl lysine isopeptide (Lys-Gly) (interchain with G-Cter in ubiquitin) cross-link involves residue K115. A Q motif motif is present at residues K181–I209. The 185-residue stretch at I212–I396 folds into the Helicase ATP-binding domain. A225–T232 serves as a coordination point for ATP. Positions D344 to D347 match the DEAD box motif. A Helicase C-terminal domain is found at D407–H567. Y414 is modified (phosphotyrosine; by BTK). Residues K416 and K442 each participate in a glycyl lysine isopeptide (Lys-Gly) (interchain with G-Cter in SUMO2) cross-link. Residues R580 to K597 form a CCHC-type zinc finger.

Belongs to the DEAD box helicase family. DDX41 subfamily. Identified in the spliceosome C complex. Interacts with ERCC6. Interacts with FAM50A. Interacts with STING1. Interacts with CGAS. Interacts with several spliceosomes components such as PRP19 or CDC5L. Post-translationally, acetylation at Lys-9 regulates the nuclear/cytoplasmic localization. Phosphorylated by BTK; phosphorylation induces binding to dsDNA and STING1. In terms of processing, 'Lys-48'-linked ubiquitinated and degraded by TRIM21 leading to negative regulation of the innate immune response to intracellular dsDNA.

Its subcellular location is the nucleus. The protein localises to the cytoplasm. The enzyme catalyses ATP + H2O = ADP + phosphate + H(+). Multifunctional protein that participates in many aspects of cellular RNA metabolism. Plays pivotal roles in innate immune sensing and hematopoietic homeostasis. Recognizes foreign or self-nucleic acids generated during microbial infection, thereby initiating anti-pathogen responses. Mechanistically, phosphorylation by BTK allows binding to dsDNA leading to interaction with STING1. Modulates the homeostasis of dsDNA through its ATP-dependent DNA-unwinding activity and ATP-independent strand-annealing activity. In turn, induces STING1-mediated type I interferon and cytokine responses to DNA and DNA viruses. Selectively modulates the transcription of certain immunity-associated genes by regulating their alternative splicing. Binds to RNA (R)-loops, structures consisting of DNA/RNA hybrids and a displaced strand of DNA that occur during transcription, and prevents their accumulation, thereby maintaining genome stability. Also participates in pre-mRNA splicing, translational regulation and snoRNA processing, which is essential for ribosome biogenesis. In Homo sapiens (Human), this protein is Probable ATP-dependent RNA helicase DDX41 (DDX41).